The following is a 385-amino-acid chain: Leucine aminopeptidase 1 (385 aa).

The first 20 residues, 1 to 20, serve as a signal peptide directing secretion; it reads MKLPSLLSLGVAASTTIVAA. A propeptide spanning residues 21 to 87 is cleaved from the precursor; sequence VPDQKPIGDT…FPKTFAQTTV (67 aa). Asn177 carries an N-linked (GlcNAc...) asparagine glycan. His185, Asp204, Glu243, and Asp270 together coordinate Zn(2+). A disulfide bond links Cys319 and Cys323. Residue His352 coordinates Zn(2+).

It belongs to the peptidase M28 family. M28E subfamily. Monomer. Zn(2+) is required as a cofactor.

The protein localises to the secreted. Functionally, extracellular aminopeptidase that allows assimilation of proteinaceous substrates. The chain is Leucine aminopeptidase 1 (LAP1) from Ajellomyces capsulatus (strain NAm1 / WU24) (Darling's disease fungus).